The primary structure comprises 869 residues: Leucine--tRNA ligase (869 aa).

Positions 42 to 52 (PYPSGKLHMGH) match the 'HIGH' region motif. The 'KMSKS' region motif lies at 624-628 (TMSKS). Lys627 provides a ligand contact to ATP.

It belongs to the class-I aminoacyl-tRNA synthetase family.

The protein resides in the cytoplasm. It carries out the reaction tRNA(Leu) + L-leucine + ATP = L-leucyl-tRNA(Leu) + AMP + diphosphate. This Nitrosomonas europaea (strain ATCC 19718 / CIP 103999 / KCTC 2705 / NBRC 14298) protein is Leucine--tRNA ligase.